A 784-amino-acid polypeptide reads, in one-letter code: Toll-like receptor 2 (784 aa).

The first 20 residues, 1-20 (MPHALWTVWVLGAVISLSKE), serve as a signal peptide directing secretion. Over 21 to 587 (GVPDQPSSLS…THLSVSECHR (567 aa)) the chain is Extracellular. A disulfide bridge connects residues C31 and C37. 19 LRR repeats span residues 54-77 (AVKS…WKCV), 78-101 (NLKA…SSLR), 102-125 (SLEH…RPLS), 126-150 (SLKF…SHLT), 151-175 (NLRI…GLTF), 176-199 (LEEL…SIQN), 200-223 (ISHL…TLSS), 224-250 (LEYL…TNTL), 251-278 (IKKF…YISG), 279-308 (VSEA…VIGK), 309-337 (LETL…LTER), 338-361 (VKRI…HLKS), 362-388 (LEYL…AWPS), 389-414 (LQTL…TLKN), 415-437 (LTKL…WPEK), 438-457 (MKYL…CIPQ), 458-478 (TLEV…ILPQ), 479-500 (VKEL…FLPM), and 501-524 (LLVM…SFQK). N115 carries an N-linked (GlcNAc...) asparagine glycan. N-linked (GlcNAc...) asparagine glycosylation occurs at N199. C353 and C382 are oxidised to a cystine. A glycan (N-linked (GlcNAc...) asparagine) is linked at N414. The cysteines at positions 432 and 454 are disulfide-linked. N442 is a glycosylation site (N-linked (GlcNAc...) asparagine). The LRRCT domain maps to 525–579 (LKTLEAGGNNFICSCEFLSFTQEEQALDQILIDWPENYLCDSPSHVRGQRVQDTH). Residues 588-608 (TALVSAVCCALFLSILLTGVL) traverse the membrane as a helical segment. Over 609-784 (CHHFHGLWYM…WLNLRAAIKS (176 aa)) the chain is Cytoplasmic. In terms of domain architecture, TIR spans 639–782 (ICYDAFVSYS…GFWLNLRAAI (144 aa)). K754 is covalently cross-linked (Glycyl lysine isopeptide (Lys-Gly) (interchain with G-Cter in ubiquitin)). The ATG16L1-binding motif signature appears at 761–778 (YLEWPTDEAQQEGFWLNL).

The protein belongs to the Toll-like receptor family. As to quaternary structure, interacts with LY96, TLR1 and TLR6 (via extracellular domain). TLR2 seems to exist in heterodimers with either TLR1 or TLR6 before stimulation by the ligand. The heterodimers form bigger oligomers in response to their corresponding ligands as well as further heterotypic associations with other receptors such as CD14 and/or CD36. Binds MYD88 (via TIR domain). Interacts with TICAM1. Interacts with CNPY3. Interacts with ATG16L1. Interacts with PPP1R11. Interacts with TICAM2. Interacts with TIRAP. Ubiquitinated at Lys-754 by PPP1R11, leading to its degradation. Deubiquitinated by USP2. In terms of processing, glycosylation of Asn-442 is critical for secretion of the N-terminal ectodomain of TLR2.

The protein resides in the membrane. The protein localises to the cytoplasmic vesicle. Its subcellular location is the phagosome membrane. It is found in the membrane raft. Functionally, cooperates with LY96 to mediate the innate immune response to bacterial lipoproteins and other microbial cell wall components. Cooperates with TLR1 or TLR6 to mediate the innate immune response to bacterial lipoproteins or lipopeptides. Acts via MYD88 and TRAF6, leading to NF-kappa-B activation, cytokine secretion and the inflammatory response. May also promote apoptosis in response to lipoproteins. Forms activation clusters composed of several receptors depending on the ligand, these clusters trigger signaling from the cell surface and subsequently are targeted to the Golgi in a lipid-raft dependent pathway. Forms the cluster TLR2:TLR6:CD14:CD36 in response to diacylated lipopeptides and TLR2:TLR1:CD14 in response to triacylated lipopeptides. This Equus caballus (Horse) protein is Toll-like receptor 2 (TLR2).